The primary structure comprises 298 residues: Acetylglutamate kinase (298 aa).

Substrate-binding positions include 69-70 (GG), arginine 91, and asparagine 191.

Belongs to the acetylglutamate kinase family. ArgB subfamily.

The protein resides in the cytoplasm. It carries out the reaction N-acetyl-L-glutamate + ATP = N-acetyl-L-glutamyl 5-phosphate + ADP. Its pathway is amino-acid biosynthesis; L-arginine biosynthesis; N(2)-acetyl-L-ornithine from L-glutamate: step 2/4. Its function is as follows. Catalyzes the ATP-dependent phosphorylation of N-acetyl-L-glutamate. This chain is Acetylglutamate kinase, found in Neisseria meningitidis serogroup A / serotype 4A (strain DSM 15465 / Z2491).